We begin with the raw amino-acid sequence, 89 residues long: Small ribosomal subunit protein uS15 (89 aa).

Belongs to the universal ribosomal protein uS15 family. In terms of assembly, part of the 30S ribosomal subunit. Forms a bridge to the 50S subunit in the 70S ribosome, contacting the 23S rRNA.

Functionally, one of the primary rRNA binding proteins, it binds directly to 16S rRNA where it helps nucleate assembly of the platform of the 30S subunit by binding and bridging several RNA helices of the 16S rRNA. Its function is as follows. Forms an intersubunit bridge (bridge B4) with the 23S rRNA of the 50S subunit in the ribosome. The polypeptide is Small ribosomal subunit protein uS15 (Geobacillus thermodenitrificans (strain NG80-2)).